We begin with the raw amino-acid sequence, 526 residues long: Bifunctional purine biosynthesis protein PurH (526 aa).

In terms of domain architecture, MGS-like spans 1-147 (MTKIERALIS…KNWAHVAIVT (147 aa)).

Belongs to the PurH family.

The catalysed reaction is (6R)-10-formyltetrahydrofolate + 5-amino-1-(5-phospho-beta-D-ribosyl)imidazole-4-carboxamide = 5-formamido-1-(5-phospho-D-ribosyl)imidazole-4-carboxamide + (6S)-5,6,7,8-tetrahydrofolate. It carries out the reaction IMP + H2O = 5-formamido-1-(5-phospho-D-ribosyl)imidazole-4-carboxamide. Its pathway is purine metabolism; IMP biosynthesis via de novo pathway; 5-formamido-1-(5-phospho-D-ribosyl)imidazole-4-carboxamide from 5-amino-1-(5-phospho-D-ribosyl)imidazole-4-carboxamide (10-formyl THF route): step 1/1. It participates in purine metabolism; IMP biosynthesis via de novo pathway; IMP from 5-formamido-1-(5-phospho-D-ribosyl)imidazole-4-carboxamide: step 1/1. This is Bifunctional purine biosynthesis protein PurH from Laribacter hongkongensis (strain HLHK9).